The primary structure comprises 376 residues: Serine/threonine-protein kinase-transforming protein mos (376 aa).

A Protein kinase domain is found at 94-376 (VCLMHRLGSG…KALADSIEPM (283 aa)). Residues 100-108 (LGSGGFGSV) and Lys121 each bind ATP. The Proton acceptor role is filled by Asp229.

It belongs to the protein kinase superfamily. Ser/Thr protein kinase family.

It carries out the reaction L-seryl-[protein] + ATP = O-phospho-L-seryl-[protein] + ADP + H(+). It catalyses the reaction L-threonyl-[protein] + ATP = O-phospho-L-threonyl-[protein] + ADP + H(+). This chain is Serine/threonine-protein kinase-transforming protein mos (V-MOS), found in Moloney murine sarcoma virus (strain m1) (MoMSV).